The primary structure comprises 237 residues: Ribonuclease PH (237 aa).

Phosphate is bound by residues Arg86 and 124–126 (GTR).

This sequence belongs to the RNase PH family. Homohexameric ring arranged as a trimer of dimers.

The catalysed reaction is tRNA(n+1) + phosphate = tRNA(n) + a ribonucleoside 5'-diphosphate. In terms of biological role, phosphorolytic 3'-5' exoribonuclease that plays an important role in tRNA 3'-end maturation. Removes nucleotide residues following the 3'-CCA terminus of tRNAs; can also add nucleotides to the ends of RNA molecules by using nucleoside diphosphates as substrates, but this may not be physiologically important. Probably plays a role in initiation of 16S rRNA degradation (leading to ribosome degradation) during starvation. The sequence is that of Ribonuclease PH from Pseudoalteromonas translucida (strain TAC 125).